We begin with the raw amino-acid sequence, 466 residues long: MSVVPVVDVLQGRAAVDSEVTVRGWVRTRRDSKAGISFVAVYDGSCFDPLQAVVNNTLPNYQDEVLHLTTGCSVEVTGTVVASPGEGQSFEIQATAIKVVGWVDDPDTYPMAAKRHSIEYLREVAHLRPRTNLIGAVARVRHTLAQAIHRFFDENGYFWVSTPLITASDTEGAGEMFRVSTLDLENLPRTDTGAVDFSEDFFGKEAFLTVSGQLNGETYACALSKVYTFGPTFRAENSNTSRHLAEFWMVEPEVAFASLDDVAGLAEKMLKYVFQAVLNERADDMKFFAERVDKDAVDRLQRFVTSDFAQVDYTDAIEILLASGQKFENDVSWGIDLSSEHERYLAEQHFKAPVVVKNYPKDIKAFYMRMNEDGKTVAAMDVLAPGIGEIIGGSQREERLDVLDARLAEMGLNKEDYWWYRDLRRYGTVPHSGFGLGFERLISYVTGVQNVRDVIPFPRTPRNASF.

It belongs to the class-II aminoacyl-tRNA synthetase family. Homodimer.

It is found in the cytoplasm. It catalyses the reaction tRNA(Asn) + L-asparagine + ATP = L-asparaginyl-tRNA(Asn) + AMP + diphosphate + H(+). The chain is Asparagine--tRNA ligase from Yersinia enterocolitica serotype O:8 / biotype 1B (strain NCTC 13174 / 8081).